The primary structure comprises 156 residues: Transmembrane inner ear expressed protein (156 aa).

A signal peptide spans methionine 1–glycine 27. Topologically, residues glutamine 28–tryptophan 57 are extracellular. A helical membrane pass occupies residues histidine 58–phenylalanine 78. Residues asparagine 79 to lysine 156 are Cytoplasmic-facing. The disordered stretch occupies residues asparagine 113–aspartate 135.

As to quaternary structure, forms the MET channel composed of TMC (TMC1 or TMC2), TMIE, TOMT, CIB (CIB2 or CIB3), LHPL5 and PCDH15. As to expression, expressed in many tissues.

It is found in the membrane. Auxiliary subunit of the mechanotransducer (MET) non-specific cation channel complex located at the tips of stereocilia of cochlear hair cells and that mediates sensory transduction in the auditory system. The MET complex is composed of two dimeric pore-forming ion-conducting transmembrane TMC (TMC1 or TMC2) subunits, and aided by several auxiliary proteins including LHFPL5, TMIE, CIB2/3 and TOMT, and the tip-link PCDH15. May contribute to the formation of the pore. In Homo sapiens (Human), this protein is Transmembrane inner ear expressed protein (TMIE).